Consider the following 354-residue polypeptide: Uroporphyrinogen decarboxylase (354 aa).

Substrate-binding positions include 30–34 (RQAGR), Asp79, Tyr154, Ser209, and His333.

It belongs to the uroporphyrinogen decarboxylase family. Homodimer.

Its subcellular location is the cytoplasm. The catalysed reaction is uroporphyrinogen III + 4 H(+) = coproporphyrinogen III + 4 CO2. Its pathway is porphyrin-containing compound metabolism; protoporphyrin-IX biosynthesis; coproporphyrinogen-III from 5-aminolevulinate: step 4/4. Catalyzes the decarboxylation of four acetate groups of uroporphyrinogen-III to yield coproporphyrinogen-III. The sequence is that of Uroporphyrinogen decarboxylase from Mycobacterium sp. (strain JLS).